The following is a 389-amino-acid chain: Cellobiose 2-epimerase (389 aa).

Belongs to the cellobiose 2-epimerase family. As to quaternary structure, monomer.

The enzyme catalyses D-cellobiose = beta-D-glucosyl-(1-&gt;4)-D-mannopyranose. In terms of biological role, catalyzes the reversible epimerization of cellobiose to 4-O-beta-D-glucopyranosyl-D-mannose (Glc-Man). Catalyzes epimerization but also isomerization for beta-1,4- and alpha-1,4-gluco-oligosaccharides. Can use cellobiose, lactose, cellotriose, maltose and maltotriose. This is Cellobiose 2-epimerase from Dictyoglomus turgidum (strain DSM 6724 / Z-1310).